The following is a 242-amino-acid chain: Large ribosomal subunit protein uL1 (242 aa).

This sequence belongs to the universal ribosomal protein uL1 family. As to quaternary structure, part of the 50S ribosomal subunit.

In terms of biological role, binds directly to 23S rRNA. The L1 stalk is quite mobile in the ribosome, and is involved in E site tRNA release. Its function is as follows. Protein L1 is also a translational repressor protein, it controls the translation of the L11 operon by binding to its mRNA. In Persephonella marina (strain DSM 14350 / EX-H1), this protein is Large ribosomal subunit protein uL1.